The primary structure comprises 323 residues: Ribose-phosphate pyrophosphokinase (323 aa).

Residues 38 to 40 (DGE) and 96 to 97 (RQ) each bind ATP. Residues histidine 130 and aspartate 170 each contribute to the Mg(2+) site. The active site involves lysine 193. D-ribose 5-phosphate contacts are provided by residues arginine 195, aspartate 219, and 223-227 (DTAGT).

The protein belongs to the ribose-phosphate pyrophosphokinase family. Class I subfamily. In terms of assembly, homohexamer. Mg(2+) is required as a cofactor.

The protein resides in the cytoplasm. The catalysed reaction is D-ribose 5-phosphate + ATP = 5-phospho-alpha-D-ribose 1-diphosphate + AMP + H(+). Its pathway is metabolic intermediate biosynthesis; 5-phospho-alpha-D-ribose 1-diphosphate biosynthesis; 5-phospho-alpha-D-ribose 1-diphosphate from D-ribose 5-phosphate (route I): step 1/1. In terms of biological role, involved in the biosynthesis of the central metabolite phospho-alpha-D-ribosyl-1-pyrophosphate (PRPP) via the transfer of pyrophosphoryl group from ATP to 1-hydroxyl of ribose-5-phosphate (Rib-5-P). The sequence is that of Ribose-phosphate pyrophosphokinase from Chlorobaculum tepidum (strain ATCC 49652 / DSM 12025 / NBRC 103806 / TLS) (Chlorobium tepidum).